We begin with the raw amino-acid sequence, 443 residues long: METLASLYNEHLSTLQQRTRDVLERHQLDALLIHSGELQRLFLDDRDYPFKVNPQFKAWVPVTEVPNCWLWVDGVNTPKLWFYSPVDYWHSVEPLPDSFWTKNIDVQPLLNADDIAQQLPVQRERVAYIGYAQQRAQALGFSAENINPQPVLDYLHYYRSYKTDYELACMREAQKTAVVGHRAAYEAFQSGMSEFDINLAYLMATGHRDTDVPYDNIVALNEHSAVLHYTILQHQPPAEIRSFLIDAGAEYNGYAADLTRTYTADRDSDFAALISDLNTEQLALIDTIKSGERYTDYHVQMHQRIAKLLRTHNLVTGISEEAMVEQGITCPFLPHGLGHPLGLQVHDTAGFMQDDKGTNLNAPSKYPYLRCTRVLQPRMVLTIEPGLYFIDSLLAPWRIGEFSKHFNWDRIDALKPYGGIRIEDNIVIHDKRVENMTRDLKLA.

5 residues coordinate Mn(2+): Asp246, Asp257, His339, Glu384, and Glu423.

It belongs to the peptidase M24B family. Bacterial-type prolidase subfamily. Requires Mn(2+) as cofactor.

The enzyme catalyses Xaa-L-Pro dipeptide + H2O = an L-alpha-amino acid + L-proline. In terms of biological role, splits dipeptides with a prolyl residue in the C-terminal position. This chain is Xaa-Pro dipeptidase, found in Yersinia pestis bv. Antiqua (strain Nepal516).